The sequence spans 363 residues: Palmitoyltransferase ZDHHC9 (363 aa).

The Cytoplasmic portion of the chain corresponds to 1–35; that stretch reads MSVMVVRKKVTRKWEKLPGRNTFCCDGRVMMARQK. Residues 36 to 56 traverse the membrane as a helical segment; that stretch reads GIFYLTLFLILGTCTLFFAFE. The Lumenal segment spans residues 57–63; the sequence is CRYLAVQ. The helical transmembrane segment at 64–84 threads the bilayer; sequence LSPAIPVFAAMLFLFSMATLL. Over 85–183 the chain is Cytoplasmic; the sequence is RTSFSDPGVI…NCVGKRNYRY (99 aa). The 51-residue stretch at 139-189 folds into the DHHC domain; the sequence is KYCYTCKIFRPPRASHCSICDNCVERFDHHCPWVGNCVGKRNYRYFYLFIL. Residue C169 is the S-palmitoyl cysteine intermediate of the active site. Residues 184–204 traverse the membrane as a helical segment; that stretch reads FYLFILSLSLLTIYVFAFNIV. The Lumenal portion of the chain corresponds to 205–228; the sequence is YVALKSLKIGFLETLKETPGTVLE. Residues 229-249 traverse the membrane as a helical segment; the sequence is VLICFFTLWSVVGLTGFHTFL. Topologically, residues 250-363 are cytoplasmic; it reads VALNQTTNED…PPQEVTEAEK (114 aa). The interval 303–363 is disordered; the sequence is PLEESGSRPP…PPQEVTEAEK (61 aa). A compositionally biased stretch (polar residues) spans 310–322; it reads RPPSTQEASTSLL. Residues 345-355 show a composition bias toward pro residues; the sequence is EMPPPEPPEPP.

It belongs to the DHHC palmitoyltransferase family. ERF2/ZDHHC9 subfamily. In terms of assembly, interacts with GOLGA7.

It is found in the endoplasmic reticulum membrane. The protein resides in the golgi apparatus membrane. It carries out the reaction L-cysteinyl-[protein] + hexadecanoyl-CoA = S-hexadecanoyl-L-cysteinyl-[protein] + CoA. Palmitoyltransferase that catalyzes the addition of palmitate onto various protein substrates, such as ADRB2, GSDMD, HRAS, NRAS and CGAS. The ZDHHC9-GOLGA7 complex is a palmitoyltransferase specific for HRAS and NRAS. May have a palmitoyltransferase activity toward the beta-2 adrenergic receptor/ADRB2 and therefore regulate G protein-coupled receptor signaling. Acts as a regulator of innate immunity by catalyzing palmitoylation of CGAS, thereby promoting CGAS homodimerization and cyclic GMP-AMP synthase activity. Activates pyroptosis by catalyzing palmitoylation of gasdermin-D (GSDMD), thereby promoting membrane translocation and pore formation of GSDMD. The protein is Palmitoyltransferase ZDHHC9 (ZDHHC9) of Bos taurus (Bovine).